Reading from the N-terminus, the 146-residue chain is Large ribosomal subunit protein uL15 (146 aa).

A disordered region spans residues 1–65 (MSDIQLNTLK…GQMPLQRRLP (65 aa)). A compositionally biased stretch (gly residues) spans 24-34 (RGIGSGLGKTA).

This sequence belongs to the universal ribosomal protein uL15 family. Part of the 50S ribosomal subunit.

In terms of biological role, binds to the 23S rRNA. In Bordetella parapertussis (strain 12822 / ATCC BAA-587 / NCTC 13253), this protein is Large ribosomal subunit protein uL15.